The primary structure comprises 727 residues: MKSLGIQEIIDGASSMSLQERQREQKEIRQTFANSSESDLVGVEQSVEALAGHLVENDNIQVVSISGMGGIGKTTLARQVFHHDMVQRHFDGFAWVFVSQQFTQKHVWQRIWQELQPQNGDISHMDEHILQGKLFKLLETGRYLVVLDDVWKEEDWDRIKAVFPRKRGWKMLLTSRNEGVGIHADPKSFGFKTRILTPEESWKLCEKIVFHRRDETGTLSEVRVDEDMEAMGKEMVTCCGGLPLAVKVLGGLLATKHTVPEWKRVYDNIGPHLAGRSSLDDNLNSIYRVLSLSYENLPMCLKHCFLYLAHFPEYYEIHVKRLFNYLAAEGIITSSDDGTTIQDKGEDYLEELARRNMITIDKNYMFLRKKHCQMHDMMREVCLSKAKEENFLEIFKVSTATSAINARSLSKSRRLSVHGGNALPSLGQTINKKVRSLLYFAFEDEFCILESTTPCFRSLPLLRVLDLSRVKFEGGKLPSSIGDLIHLRFLSLHRAWISHLPSSLRNLKLLLYLNLGFNGMVHVPNVLKEMQELRYLQLPMSMHDKTKLELSDLVNLESLMNFSTKYASVMDLLHMTKLRELSLFITDGSSDTLSSSLGQLRSLEVLHLYDRQEPRVAYHGGEIVLNCIHLKELELAIHMPRFPDQYLFHPHLSHIYLWCCSMEEDPIPILERLLHLKSVILTFGAFVGRRMVCSKGGFPQLCFLKLEELEELEEWIVEEGRCHFFVL.

The NB-ARC domain maps to 44–336 (EQSVEALAGH…AAEGIITSSD (293 aa)). LRR repeat units lie at residues 459 to 484 (LPLLRVLDLSRVKFEGGKLPSSIGDL), 485 to 507 (IHLRFLSLHRAWISHLPSSLRNL), 509 to 530 (LLLYLNLGFNGMVHVPNVLKEM), 575 to 600 (MTKLRELSLFITDGSSDTLSSSLGQL), and 601 to 626 (RSLEVLHLYDRQEPRVAYHGGEIVLN).

This sequence belongs to the disease resistance NB-LRR family. RPP8/HRT subfamily.

The protein is Putative inactive disease susceptibility protein LOV1 (LOV1) of Arabidopsis thaliana (Mouse-ear cress).